The sequence spans 424 residues: Protein FAM43A (424 aa).

Acidic residues predominate over residues Gln261–Ala297. Disordered stretches follow at residues Gln261–Ala299 and Leu382–Gly424. Residues Leu382 to Ile394 show a composition bias toward low complexity. Positions Ser405–Leu418 are enriched in polar residues.

The protein belongs to the FAM43 family.

In Mus musculus (Mouse), this protein is Protein FAM43A (Fam43a).